Here is a 176-residue protein sequence, read N- to C-terminus: NADH-dependent flavin reductase (176 aa).

FAD contacts are provided by residues 39-46 (EDSVHGMT) and 48-49 (NA). Ser-52 is an NAD(+) binding site. Residues 63 to 65 (SIS), 69 to 70 (KM), and 95 to 96 (HF) contribute to the FAD site. Residues His-137 and 157–160 (FYTG) contribute to the NAD(+) site.

This sequence belongs to the non-flavoprotein flavin reductase family. As to quaternary structure, homodimer. 4-nitrophenol 2-monooxygenase complex consists of an oxygenase component NphA1 and a flavin reductase component NphA2.

It carries out the reaction a reduced flavin + NAD(+) = an oxidized flavin + NADH + 2 H(+). Catalyzes the reduction of FAD with the concomitant oxidation of NADH. NAD is the physiological electron donor. Subsequently, the reduced flavins diffuse to the oxygenase component NphA2. This chain is NADH-dependent flavin reductase (nphA2), found in Rhodococcus sp.